Consider the following 143-residue polypeptide: Putative glycerol transporter Lin0368 (143 aa).

4 helical membrane passes run 6–26 (GMIG…PLAE), 27–47 (NYGI…MWFM), 60–80 (AAFV…DVFM), and 90–110 (LPTI…AAAI). Positions 118–143 (HEAKQEKTEPGMNIKEEERLNENQLV) are disordered.

It is found in the membrane. In terms of biological role, could be involved in the glycerol uptake either via facilitated diffusion or active transport. The chain is Putative glycerol transporter Lin0368 from Listeria innocua serovar 6a (strain ATCC BAA-680 / CLIP 11262).